Reading from the N-terminus, the 370-residue chain is tRNA-specific 2-thiouridylase MnmA (370 aa).

Residues 24 to 31 and leucine 50 each bind ATP; that span reads AMSGGVDS. The Nucleophile role is filled by cysteine 119. A disulfide bridge links cysteine 119 with cysteine 215. Glycine 143 contacts ATP. Positions 165 to 167 are interaction with tRNA; the sequence is KDQ. The active-site Cysteine persulfide intermediate is the cysteine 215.

Belongs to the MnmA/TRMU family.

The protein resides in the cytoplasm. It carries out the reaction S-sulfanyl-L-cysteinyl-[protein] + uridine(34) in tRNA + AH2 + ATP = 2-thiouridine(34) in tRNA + L-cysteinyl-[protein] + A + AMP + diphosphate + H(+). Catalyzes the 2-thiolation of uridine at the wobble position (U34) of tRNA, leading to the formation of s(2)U34. This is tRNA-specific 2-thiouridylase MnmA from Wolbachia pipientis wMel.